A 425-amino-acid chain; its full sequence is SRRM2 protein homolog rsr-2 (425 aa).

A CWF21 domain is found at 57 to 100 (MDHNRKRQIEVKCTEFEMLLEDKGLDDEDIERKVGEYRKNLLKQ). Disordered stretches follow at residues 109–131 (DEELSTKESHARRRAAANNRDKM) and 161–425 (ESEL…SDSE). Residues 164 to 178 (LPQKDDKEKLLETLR) show a composition bias toward basic and acidic residues. Positions 189–202 (SSSSSSSSSSSSES) are enriched in low complexity. Residues 210–221 (RKDRKKKEKKQK) are compositionally biased toward basic residues. 2 stretches are compositionally biased toward basic and acidic residues: residues 222 to 251 (LKEMEKRREKLRQKERELLAVSDKVKKEEP) and 259 to 305 (DSRK…EDRT). Positions 306–317 (VRRRSPERRRQQ) are enriched in basic residues. Basic and acidic residues-rich tracts occupy residues 321–332 (SVERRKSPQRRD), 355–366 (SRMDELEVKQEP), and 383–398 (RVEKSAEKVEKSRKSS). The span at 399–425 (SESSSGSSDSDSSSDSSSSSDSSSDSE) shows a compositional bias: low complexity.

This sequence belongs to the CWC21 family. In terms of assembly, interacts with RNA polymerase II subunit ama-1, binding to both hyperphosphorylated and hypophosphorylated forms, but more strongly when ama-1 is phosphorylated at 'Ser-5' of the C-terminal heptapeptide repeat. Interacts with pre-mRNA-processing factor prp-19. May also interact with pre-mRNA-splicing factor 8 homolog prp-8. In terms of tissue distribution, expressed in the proximal germline, but not in the most distal part where mitosis takes place. May be expressed ubiquitously in somatic cells.

Its subcellular location is the nucleus. The protein resides in the chromosome. It is found in the nuclear body. In terms of biological role, plays a role in pre-mRNA splicing as component of the spliceosome. Involved in modulating global transcription, probably acting via interaction with RNA polymerase II. Influences the chromatin distribution and phosphorylation state of RNA polymerase II subunit ama-1. Involved in regulating the germline sex determination pathway. The polypeptide is SRRM2 protein homolog rsr-2 (Caenorhabditis elegans).